The sequence spans 824 residues: MTEQRRSPHHPATRPPAPPGTSRRVRLPASALRPLVLAMAGLTVSAHAQYGATSAIPNIDLVEPVVTQTPEAPPPPAEGGDLVPRLTEPATRTAPSGNTLNLSPSSTPSNPNAPAYVSGDRVTGYSEKGVEMEGHAELRRDGGVIKGDRLTYDQDTDEAHATGNVRLSKSGTLAVGPEARMRVQANEGYMLSPDYYFQQTGGSGSAERVDFLDPDRSTLKKATYTTCSPDNADWYFSARKLDLDSDRQVGTAYGGVLNFFGVPIAGAPAFSFPLNGERRSGVLPPLFGYGSNSGADLTVPYYFNLAPNRDLTIYPRILTSRGVQLGEDFRYVGDGYSGRIRGEFLPDDKKAGRNRWAYSIQHYQSIIPGMTAYVNVSKVSDDKYPDDLTRSVSQSTLRQYTQEGGVIYAWQDWVFMARVQKFQTLLPSEPSYEREPQLNAKYNRYDFHGFDISLETDYTRFRIPLTSTGFQQPEGNRAFIQPTISYPIIHPGWYVTPKFIFNAAQYNMDAGTNTTGASNTLNRAIPTVSLDSGMTFERDAPGVSKLFGVKYTQTLEPRLFYVYTPFYDQSQFPLFDTVQSDFGYGQIFTENPFTGNDRIADNNKLTLGLTTRLIESETGVERFRGTIAQRVDFTGQRVQLNGTLPDAKPSYSDLLAATTIQLFRGYYLDAGIQWNPDQDKVNYSNVALAYRPESRKLINFGYRYRRPTSVTDNTAIDQIEMSGQWPITQRTYGIGRVAFDKSANQLVDALAGFEYAADCWVGRFVYQRFRNTSNGYTGRVFFQVEFRGLSKIGSNPLDMLRLNVPGYEPVTARPVPTTPYDHYE.

Disordered stretches follow at residues 1 to 26 and 67 to 117; these read MTEQ…RRVR and TQTP…PAYV. The signal sequence occupies residues 1–48; it reads MTEQRRSPHHPATRPPAPPGTSRRVRLPASALRPLVLAMAGLTVSAHA. Residues 98–115 are compositionally biased toward low complexity; sequence NTLNLSPSSTPSNPNAPA.

The protein belongs to the LptD family. Component of the lipopolysaccharide transport and assembly complex. Interacts with LptE and LptA.

Its subcellular location is the cell outer membrane. Together with LptE, is involved in the assembly of lipopolysaccharide (LPS) at the surface of the outer membrane. The chain is LPS-assembly protein LptD from Cupriavidus metallidurans (strain ATCC 43123 / DSM 2839 / NBRC 102507 / CH34) (Ralstonia metallidurans).